A 116-amino-acid polypeptide reads, in one-letter code: POU domain, class 4, transcription factor 1 (116 aa).

A POU-specific domain is found at 1–54 (VTQADVGSALANLKIPGVGSLSQSTICRFESLTLSHNNMIALKPILQAWLEEAE). The tract at residues 56–79 (AQREKMNKPELFNGGEKKRKRTSI) is disordered. A DNA-binding region (homeobox) is located at residues 72–116 (KKRKRTSIAAPEKRSLEAYFAVQPRPSSEKIAAIAEKLDLKKNVV).

Belongs to the POU transcription factor family. Class-4 subfamily.

Its subcellular location is the nucleus. It is found in the cytoplasm. Multifunctional transcription factor with different regions mediating its different effects. Acts by binding (via its C-terminal domain) to sequences related to the consensus octamer motif 5'-ATGCAAAT-3' in the regulatory regions of its target genes. Regulates the expression of specific genes involved in differentiation and survival within a subset of neuronal lineages. It has been shown that activation of some of these genes requires its N-terminal domain, maybe through a neuronal-specific cofactor. The chain is POU domain, class 4, transcription factor 1 (POU4F1) from Gallus gallus (Chicken).